A 386-amino-acid chain; its full sequence is Nucleosome assembly protein 1-like 4 (386 aa).

Residues 1–28 (MAENSLSDGGPADSVEAAKNASNTEKLT) form a disordered region. Ala-2 carries the post-translational modification N-acetylalanine. Residues Ser-5, Ser-7, and Ser-49 each carry the phosphoserine modification. Thr-51 is subject to Phosphothreonine. Phosphoserine is present on residues Ser-53 and Ser-54. Thr-58 bears the Phosphothreonine mark. Lys-105 is modified (N6-acetyllysine). The residue at position 125 (Ser-125) is a Phosphoserine. Position 146 is an N6-acetyllysine (Lys-146). The Nuclear localization signal signature appears at 265 to 271 (IKKKQKH). Ser-304 bears the Phosphoserine mark. Positions 339 to 370 (AIEDDDNFEEGEEGEEEELEGDEEGEDEDDAD) are enriched in acidic residues. The segment at 339-386 (AIEDDDNFEEGEEGEEEELEGDEEGEDEDDADVNPKKEPIQPAECKQQ) is disordered.

This sequence belongs to the nucleosome assembly protein (NAP) family. As to quaternary structure, interacts with core (H2A, H2B, H3, H4) and linker (H1) histones. In terms of processing, polyglutamylated and polyglycylated. These 2 modifications occur exclusively on glutamate residues and result in either polyglutamate or polyglycine chains on the gamma-carboxyl group. Both modifications can coexist on the same protein on adjacent residues, and lowering polyglycylation levels increases polyglutamylation, and reciprocally. Polyglutamylated by TTLL4. Post-translationally, phosphorylated at the G0/G1 boundary but it is not phosphorylated in S-phase. Phosphorylated protein remains in the cytoplasm in a complex with histones during the G0/G1 transition, whereas dephosphorylation triggers its transport into the nucleus at the G1/S-boundary.

The protein localises to the nucleus. It localises to the cytoplasm. Its function is as follows. Acts as a histone chaperone in nucleosome assembly. The chain is Nucleosome assembly protein 1-like 4 (Nap1l4) from Rattus norvegicus (Rat).